Here is a 24-residue protein sequence, read N- to C-terminus: Outer membrane protein (24 aa).

It belongs to the Gram-negative porin family. Homotrimer.

It is found in the cell outer membrane. Functionally, forms pores that allow passive diffusion of small molecules across the outer membrane. The chain is Outer membrane protein from Sodalis glossinidius.